The sequence spans 1488 residues: MIERGKFRSLTLINWNGFFARTFDLDELVTTLSGGNGAGKSTTMAAFVTALIPDLTLLHFRNTTEAGATSGSRDKGLHGKLKAGVCYSMLDTINSRHQRVVVGVRLQQVAGRDRKVDIKPFAIQGLPMSVQPTQLVTETLNERQARVLSLAELKDKLDEMEGVQFKQFNSITDYHSLMFDLGIIARRLRSASDRSKFYRLIEASLYGGISSAITRSLRDYLLPENSGVRKAFQDMEAALRENRLTLEAIRVTQSDRDLFKHLISEATDYVAADYMRHANERRVHLDQALAFRRELYTSRKQLAAEQYKHVDMARELGEHNGAEGSLEADYQAASDHLNLVQTALRQQEKIERYEADLEELQIRLEEQNEVVAEAAEMQDENEARAEAAELEVDELKSQLADYQQALDVQQTRAIQYNQAISALARAKELCHLPDLTPESAAEWLDTFQAKEQEATEKLLSLEQKMSVAQTAHSQFEQAYQLVAAINGPLARSEAWDVARELLRDGVNQRHLAEQVQPLRMRLSELEQRLREQQEAERLLAEFCKRQGKNFDIDELEALHQELEARIASLSESVSSASEQRMALRQEQEQLQSRIQHLMQRAPVWLAAQNSLNQLSEQCGEEFTSSQEVTEYLQQLLEREREAIVERDEVGARKNAVDEEIERLSQPGGAEDQRLNALAERFGGVLLSEIYDDVSLEDAPYFSALYGPSRHAIVVPDLSQIAEQLEGLTDCPEDLYLIEGDPQSFDDSVFSVDELEKAVVVKIADRQWRYSRFPSLPIFGRAARENRIESLHAEREVLSERFATLSFDVQKTQRLHQAFSRFIGSHLSVAFEDDPEAEIRRLNGRRVELERALATHESDNQQQRLQFEQAKEGVSALNRLLPRLNLLADETLADRVDEIQERLDEAQEAARFVQQYGNQLAKLEPVVSVLQSDPEQFEQLKEDYAWSQQMQRDARQQAFALAEVVERRAHFSYSDSAEMLSGNSDLNEKLRQRLEQAEAERTRAREALRSHAAQLSQYSQVLASLKSSYDTKKELLNDLQRELQDIGVRADSGAEERARQRRDELHAQLSNNRSRRNQLEKALTFCEAEMENLTRKLRKLERDYHEMREQVVTAKAGWCAVMRMVKDNGVERRLHRRELAYLSADELRSMSDKALGALRLAVADNEHLRDVLRLSEDPKRPERKIQFFVAVYQHLRERIRQDIIRTDDPVEAIEQMEIELSRLTEELTSREQKLAISSRSVANIIRKTIQREQNRIRMLNQGLQSVSFGQVNSVRLNVNVRETHATLLDVLSEQQEQHQDLFNSNRLTFSEALAKLYQRLNPQIDMGQRTPQTIGEELLDYRNYLEMEVEVNRGSDGWLRAESGALSTGEAIGTGMSILVMVVQSWEDEARRLRGKDISPCRLLFLDEAARLDARSIATLFELCERLQMQLIIAAPENISPEKGTTYKLVRKVFQNTEHVHVVGLRGFAPQLPETLPGTQTEDTPSEAS.

ATP is bound at residue 34–41 (GGNGAGKS). Coiled coils occupy residues 326–418 (LEAD…QYNQ), 444–472 (LDTF…QTAH), and 509–602 (RHLA…QRAP). A flexible hinge region spans residues 666–783 (PGGAEDQRLN…SLPIFGRAAR (118 aa)). Coiled coils occupy residues 835-923 (EAEI…AKLE), 977-1116 (EMLS…AKAG), and 1209-1265 (VEAI…LQSV). The interval 1049 to 1074 (ADSGAEERARQRRDELHAQLSNNRSR) is disordered. Basic and acidic residues predominate over residues 1051–1065 (SGAEERARQRRDELH).

It belongs to the SMC family. MukB subfamily. Homodimerization via its hinge domain. Binds to DNA via its C-terminal region. Interacts, and probably forms a ternary complex, with MukE and MukF via its C-terminal region. The complex formation is stimulated by calcium or magnesium. Interacts with tubulin-related protein FtsZ.

The protein resides in the cytoplasm. It is found in the nucleoid. Functionally, plays a central role in chromosome condensation, segregation and cell cycle progression. Functions as a homodimer, which is essential for chromosome partition. Involved in negative DNA supercoiling in vivo, and by this means organize and compact chromosomes. May achieve or facilitate chromosome segregation by condensation DNA from both sides of a centrally located replisome during cell division. The polypeptide is Chromosome partition protein MukB (Salmonella enteritidis PT4 (strain P125109)).